Consider the following 170-residue polypeptide: Adenine phosphoribosyltransferase (170 aa).

It belongs to the purine/pyrimidine phosphoribosyltransferase family. In terms of assembly, homodimer.

The protein resides in the cytoplasm. It carries out the reaction AMP + diphosphate = 5-phospho-alpha-D-ribose 1-diphosphate + adenine. Its pathway is purine metabolism; AMP biosynthesis via salvage pathway; AMP from adenine: step 1/1. Functionally, catalyzes a salvage reaction resulting in the formation of AMP, that is energically less costly than de novo synthesis. This is Adenine phosphoribosyltransferase from Lactococcus lactis subsp. lactis (strain IL1403) (Streptococcus lactis).